A 257-amino-acid chain; its full sequence is Chlorocatechol 1,2-dioxygenase (257 aa).

Residues Tyr134, Tyr169, His194, and His196 each coordinate Fe cation.

It belongs to the intradiol ring-cleavage dioxygenase family. The cofactor is Fe(3+).

It catalyses the reaction 4-chlorocatechol + O2 = 3-chloro-cis,cis-muconate + 2 H(+). The enzyme catalyses 3,5-dichlorocatechol + O2 = (2E,4E)-2,4-dichloromuconate + 2 H(+). The polypeptide is Chlorocatechol 1,2-dioxygenase (clcA) (Rhodococcus opacus (Nocardia opaca)).